Consider the following 279-residue polypeptide: 4-hydroxy-3-methylbut-2-enyl diphosphate reductase (279 aa).

[4Fe-4S] cluster is bound at residue Cys-12. (2E)-4-hydroxy-3-methylbut-2-enyl diphosphate-binding residues include His-41 and His-74. Dimethylallyl diphosphate is bound by residues His-41 and His-74. Isopentenyl diphosphate contacts are provided by His-41 and His-74. Cys-96 is a binding site for [4Fe-4S] cluster. His-124 contributes to the (2E)-4-hydroxy-3-methylbut-2-enyl diphosphate binding site. His-124 contacts dimethylallyl diphosphate. His-124 provides a ligand contact to isopentenyl diphosphate. Glu-126 acts as the Proton donor in catalysis. Thr-164 serves as a coordination point for (2E)-4-hydroxy-3-methylbut-2-enyl diphosphate. Cys-192 provides a ligand contact to [4Fe-4S] cluster. Residues Ser-220, Ser-221, Asn-222, and Ser-263 each contribute to the (2E)-4-hydroxy-3-methylbut-2-enyl diphosphate site. 4 residues coordinate dimethylallyl diphosphate: Ser-220, Ser-221, Asn-222, and Ser-263. Ser-220, Ser-221, Asn-222, and Ser-263 together coordinate isopentenyl diphosphate.

The protein belongs to the IspH family. The cofactor is [4Fe-4S] cluster.

It catalyses the reaction isopentenyl diphosphate + 2 oxidized [2Fe-2S]-[ferredoxin] + H2O = (2E)-4-hydroxy-3-methylbut-2-enyl diphosphate + 2 reduced [2Fe-2S]-[ferredoxin] + 2 H(+). It carries out the reaction dimethylallyl diphosphate + 2 oxidized [2Fe-2S]-[ferredoxin] + H2O = (2E)-4-hydroxy-3-methylbut-2-enyl diphosphate + 2 reduced [2Fe-2S]-[ferredoxin] + 2 H(+). The protein operates within isoprenoid biosynthesis; dimethylallyl diphosphate biosynthesis; dimethylallyl diphosphate from (2E)-4-hydroxy-3-methylbutenyl diphosphate: step 1/1. It functions in the pathway isoprenoid biosynthesis; isopentenyl diphosphate biosynthesis via DXP pathway; isopentenyl diphosphate from 1-deoxy-D-xylulose 5-phosphate: step 6/6. Its function is as follows. Catalyzes the conversion of 1-hydroxy-2-methyl-2-(E)-butenyl 4-diphosphate (HMBPP) into a mixture of isopentenyl diphosphate (IPP) and dimethylallyl diphosphate (DMAPP). Acts in the terminal step of the DOXP/MEP pathway for isoprenoid precursor biosynthesis. The chain is 4-hydroxy-3-methylbut-2-enyl diphosphate reductase from Clostridioides difficile (strain 630) (Peptoclostridium difficile).